The following is a 238-amino-acid chain: tRNA (guanine-N(7)-)-methyltransferase (238 aa).

Residues glutamate 70, aspartate 95, aspartate 122, and aspartate 145 each contribute to the S-adenosyl-L-methionine site. Residue aspartate 145 is part of the active site. Substrate is bound by residues lysine 149, aspartate 181, and 216 to 219; that span reads TKFE.

This sequence belongs to the class I-like SAM-binding methyltransferase superfamily. TrmB family.

It catalyses the reaction guanosine(46) in tRNA + S-adenosyl-L-methionine = N(7)-methylguanosine(46) in tRNA + S-adenosyl-L-homocysteine. The protein operates within tRNA modification; N(7)-methylguanine-tRNA biosynthesis. Catalyzes the formation of N(7)-methylguanine at position 46 (m7G46) in tRNA. The protein is tRNA (guanine-N(7)-)-methyltransferase of Neisseria meningitidis serogroup B (strain ATCC BAA-335 / MC58).